Consider the following 488-residue polypeptide: SAGA complex subunit HFI1 (488 aa).

2 disordered regions span residues 1 to 58 (MSAI…QGPN) and 352 to 383 (QLDD…IGDI). Polar residues predominate over residues 37–58 (AVSNHTEPNNGNNETAEPQGPN).

In terms of assembly, component of the 1.8 MDa SAGA (Spt-Ada-Gcn5 acetyltransferase) complex, which is composed of 19 subunits TRA1, SPT7, TAF5, NGG1/ADA3, SGF73, SPT20/ADA5, SPT8, TAF12, TAF6, HFI1/ADA1, UBP8, GCN5, ADA2, SPT3, SGF29, TAF10, TAF9, SGF11 and SUS1. The SAGA complex is composed of 4 modules, namely the HAT (histone acetyltransferase) module (GCN5, ADA2, NGG1/ADA3 and SGF29), the DUB (deubiquitinating) module (UBP8, SGF11, SGF73 and SUS1), the core or TAF (TBP-associated factor) module (TAF5, TAF6, TAF9, TAF10 and TAF12), and the Tra1 or SPT (Suppressor of Ty) module (TRA1, HFI1/ADA1, SPT3, SPT7, SPT8 and SPT20/ADA5). The Tra1/SPT module binds activators, the core module recruits TBP (TATA-binding protein), the HAT module contains the histone H3 acetyltransferase GCN5, and the DUB module comprises the histone H2B deubiquitinase UBP8. Also identified in an altered form of SAGA, named SALSA (SAGA altered, Spt8 absent) or SLIK (SAGA-like) complex, which contains a C-terminal truncated form of SPT7 and is missing SPT8. However, it has been shown that the SAGA and SAGA-like SALSA/SLIK transcriptional coactivators are structurally and biochemically equivalent. Component of an ADA/GCN5 complex that consists of HFI1/ADA1, ADA2, NGG1/ADA3, SPT20/ADA5 and GCN5 and probably is a subcomplex of SAGA.

It localises to the nucleus. In terms of biological role, component of the transcription coactivator SAGA complex. SAGA acts as a general cofactor required for essentially all RNA polymerase II transcription. At the promoters, SAGA is required for transcription pre-initiation complex (PIC) recruitment. It influences RNA polymerase II transcriptional activity through different activities such as TBP interaction (via core/TAF module) and promoter selectivity, interaction with transcription activators (via Tra1/SPT module), and chromatin modification through histone acetylation (via HAT module) and deubiquitination (via DUB module). SAGA preferentially acetylates histones H3 (to form H3K9ac, H3K14ac, H3K18ac and H3K23ac) and H2B and deubiquitinates histone H2B. SAGA interacts with DNA via upstream activating sequences (UASs). Also identified in a modified version of SAGA named SALSA or SLIK. The cleavage of SPT7 and the absence of the SPT8 subunit in SLIK neither drive any major conformational differences in its structure compared with SAGA, nor significantly affect HAT, DUB, or DNA-binding activities. This chain is SAGA complex subunit HFI1 (HFI1), found in Saccharomyces cerevisiae (strain ATCC 204508 / S288c) (Baker's yeast).